Reading from the N-terminus, the 128-residue chain is Transcription antitermination protein NusB (128 aa).

Belongs to the NusB family.

Functionally, involved in transcription antitermination. Required for transcription of ribosomal RNA (rRNA) genes. Binds specifically to the boxA antiterminator sequence of the ribosomal RNA (rrn) operons. In Listeria monocytogenes serotype 4b (strain CLIP80459), this protein is Transcription antitermination protein NusB.